The following is a 492-amino-acid chain: Gamma-aminobutyric acid receptor subunit alpha-3 (492 aa).

Residues 1–28 (MIITQTSHCYMTSLGILFLINILPGTTG) form the signal peptide. The interval 28–54 (GQGESRRQEPGDFVKQDIGGLSPKHAP) is disordered. Residues 29–274 (QGESRRQEPG…MTTHFHLKRK (246 aa)) lie on the Extracellular side of the membrane. The span at 31–42 (ESRRQEPGDFVK) shows a compositional bias: basic and acidic residues. N-linked (GlcNAc...) asparagine glycosylation is present at N63. R119 serves as a coordination point for 4-aminobutanoate. Residues N163 and N176 are each glycosylated (N-linked (GlcNAc...) asparagine). T182 contacts 4-aminobutanoate. A disulfide bridge links C191 with C205. The N-linked (GlcNAc...) asparagine glycan is linked to N228. A helical membrane pass occupies residues 275 to 295 (IGYFVIQTYLPCIMTVILSQV). At 296-305 (SFWLNRESVP) the chain is on the cytoplasmic side. The chain crosses the membrane as a helical span at residues 306 to 325 (ARTVFGVTTVLTMTTLSISA). The Extracellular portion of the chain corresponds to 326–336 (RNSLPKVAYAT). Residues 337–357 (AMDWFIAVCYAFVFSALIEFA) form a helical membrane-spanning segment. The Cytoplasmic portion of the chain corresponds to 358 to 457 (TVNYFTKRSW…TYNSVSKVDK (100 aa)). S426 is modified (phosphoserine). T427 is subject to Phosphothreonine. 2 positions are modified to phosphoserine: S433 and S442. Residues 458-478 (ISRIIFPVLFAIFNLVYWATY) form a helical membrane-spanning segment. Topologically, residues 479 to 492 (VNRESAIKGMIRKQ) are extracellular.

Belongs to the ligand-gated ion channel (TC 1.A.9) family. Gamma-aminobutyric acid receptor (TC 1.A.9.5) subfamily. GABRA3 sub-subfamily. Heteropentamer, formed by a combination of alpha (GABRA1-6), beta (GABRB1-3), gamma (GABRG1-3), delta (GABRD), epsilon (GABRE), rho (GABRR1-3), pi (GABRP) and theta (GABRQ) chains, each subunit exhibiting distinct physiological and pharmacological properties. Binds UBQLN1. Interacts with GPHN.

It localises to the postsynaptic cell membrane. The protein localises to the cell membrane. It carries out the reaction chloride(in) = chloride(out). Its activity is regulated as follows. Potentiated by etomidate, propofol, pregnanolone and flurazepam. Its function is as follows. Alpha subunit of the heteropentameric ligand-gated chloride channel gated by gamma-aminobutyric acid (GABA), a major inhibitory neurotransmitter in the brain. GABA-gated chloride channels, also named GABA(A) receptors (GABAAR), consist of five subunits arranged around a central pore and contain GABA active binding site(s) located at the alpha and beta subunit interface(s). When activated by GABA, GABAARs selectively allow the flow of chloride anions across the cell membrane down their electrochemical gradient. Chloride influx into the postsynaptic neuron following GABAAR opening decreases the neuron ability to generate a new action potential, thereby reducing nerve transmission. The polypeptide is Gamma-aminobutyric acid receptor subunit alpha-3 (Homo sapiens (Human)).